The chain runs to 334 residues: Glucosyltransferase 3 (334 aa).

Residues threonine 16, arginine 179, and 249 to 254 (SHKSAT) each bind UDP.

This sequence belongs to the Gtf3 glucosyltransferase family. As to quaternary structure, homotetramer; a dimer of dimers.

The protein operates within protein modification; protein glycosylation. In terms of biological role, required for polymorphic O-glycosylation of the serine-rich repeat protein in this bacteria. Catalyzes the second step in glycosylation by transferring glucose from UDP-glucose to the terminal GlcNAc moiety of the 3-O-(N-acetyl-alpha-D-glucosaminyl)-L-seryl-[protein] resulting from the first glycosylation step. Part of the accessory SecA2/SecY2 system specifically required to export GspB, a serine-rich repeat cell wall protein encoded upstream in the same operon. In Streptococcus gordonii, this protein is Glucosyltransferase 3.